The sequence spans 436 residues: Methylenetetrahydrofolate--tRNA-(uracil-5-)-methyltransferase TrmFO (436 aa).

Residue glycine 10–glycine 15 coordinates FAD.

It belongs to the MnmG family. TrmFO subfamily. FAD is required as a cofactor.

It localises to the cytoplasm. The enzyme catalyses uridine(54) in tRNA + (6R)-5,10-methylene-5,6,7,8-tetrahydrofolate + NADH + H(+) = 5-methyluridine(54) in tRNA + (6S)-5,6,7,8-tetrahydrofolate + NAD(+). It carries out the reaction uridine(54) in tRNA + (6R)-5,10-methylene-5,6,7,8-tetrahydrofolate + NADPH + H(+) = 5-methyluridine(54) in tRNA + (6S)-5,6,7,8-tetrahydrofolate + NADP(+). In terms of biological role, catalyzes the folate-dependent formation of 5-methyl-uridine at position 54 (M-5-U54) in all tRNAs. This Exiguobacterium sp. (strain ATCC BAA-1283 / AT1b) protein is Methylenetetrahydrofolate--tRNA-(uracil-5-)-methyltransferase TrmFO.